Reading from the N-terminus, the 283-residue chain is Rhomboid-like protease 2 (283 aa).

Positions 1–11 (MANIRTLSDYA) are enriched in polar residues. Residues 1-26 (MANIRTLSDYASSPPRGSSALEGEVG) are disordered. A run of 3 helical transmembrane segments spans residues 62–82 (IIII…AGLA), 114–134 (ICPL…WVQI), and 149–169 (LLAV…AVLF). Residue S178 is the Nucleophile of the active site. Helical transmembrane passes span 179–199 (TAVF…WHAI), 205–225 (AIIS…GSHM), 227–247 (SVGH…LNEN), and 260–280 (LTSQ…IFLV). H230 is a catalytic residue.

It belongs to the peptidase S54 family.

Its subcellular location is the membrane. It carries out the reaction Cleaves type-1 transmembrane domains using a catalytic dyad composed of serine and histidine that are contributed by different transmembrane domains.. Serine protease involved in intramembrane proteolysis and the subsequent release of polypeptides from their membrane anchors. The protein is Rhomboid-like protease 2 (ROM2) of Toxoplasma gondii.